We begin with the raw amino-acid sequence, 425 residues long: tRNA(Ile)-lysidine synthase (425 aa).

27–32 (SGGLDS) contributes to the ATP binding site.

Belongs to the tRNA(Ile)-lysidine synthase family.

The protein localises to the cytoplasm. It carries out the reaction cytidine(34) in tRNA(Ile2) + L-lysine + ATP = lysidine(34) in tRNA(Ile2) + AMP + diphosphate + H(+). Ligates lysine onto the cytidine present at position 34 of the AUA codon-specific tRNA(Ile) that contains the anticodon CAU, in an ATP-dependent manner. Cytidine is converted to lysidine, thus changing the amino acid specificity of the tRNA from methionine to isoleucine. The polypeptide is tRNA(Ile)-lysidine synthase (Streptococcus pneumoniae (strain P1031)).